A 280-amino-acid polypeptide reads, in one-letter code: uncharacterized protein (280 aa).

The transit peptide at 1 to 51 (MATSLLLRHSSAVFFSQSSFFTKNKSFRSFTSIKMEKGEAENAVKTKKVFV) directs the protein to the chloroplast.

The protein belongs to the NAD(P)-dependent epimerase/dehydratase family.

It localises to the plastid. It is found in the chloroplast. The protein resides in the plastoglobule. This is an uncharacterized protein from Arabidopsis thaliana (Mouse-ear cress).